The following is a 430-amino-acid chain: Adenylosuccinate synthetase (430 aa).

GTP is bound by residues 12 to 18 and 40 to 42; these read GDEGKGK and GHT. Asp13 (proton acceptor) is an active-site residue. Mg(2+) is bound by residues Asp13 and Gly40. IMP-binding positions include 13–16, 38–41, Thr128, Arg142, Gln223, Thr238, and Arg302; these read DEGK and NAGH. Residue His41 is the Proton donor of the active site. Residue 298–304 coordinates substrate; that stretch reads VNTGRKR. GTP is bound by residues Arg304, 330–332, and 412–414; these read KLD and GVG.

The protein belongs to the adenylosuccinate synthetase family. Homodimer. The cofactor is Mg(2+).

The protein resides in the cytoplasm. The enzyme catalyses IMP + L-aspartate + GTP = N(6)-(1,2-dicarboxyethyl)-AMP + GDP + phosphate + 2 H(+). Its pathway is purine metabolism; AMP biosynthesis via de novo pathway; AMP from IMP: step 1/2. Functionally, plays an important role in the de novo pathway of purine nucleotide biosynthesis. Catalyzes the first committed step in the biosynthesis of AMP from IMP. This chain is Adenylosuccinate synthetase, found in Corynebacterium glutamicum (strain ATCC 13032 / DSM 20300 / JCM 1318 / BCRC 11384 / CCUG 27702 / LMG 3730 / NBRC 12168 / NCIMB 10025 / NRRL B-2784 / 534).